The chain runs to 207 residues: LexA repressor (207 aa).

A DNA-binding region (H-T-H motif) is located at residues 28-48 (VREIGEAVGLASSSTVHGHLA). Residues serine 129 and lysine 167 each act as for autocatalytic cleavage activity in the active site.

Belongs to the peptidase S24 family. In terms of assembly, homodimer.

The catalysed reaction is Hydrolysis of Ala-|-Gly bond in repressor LexA.. In terms of biological role, represses a number of genes involved in the response to DNA damage (SOS response), including recA and lexA. In the presence of single-stranded DNA, RecA interacts with LexA causing an autocatalytic cleavage which disrupts the DNA-binding part of LexA, leading to derepression of the SOS regulon and eventually DNA repair. The sequence is that of LexA repressor from Brevibacillus brevis (strain 47 / JCM 6285 / NBRC 100599).